The chain runs to 770 residues: Protein argonaute (770 aa).

Residues 1–151 (MKAKVVINLV…VIHIIHQIQS (151 aa)) are N-terminal domain. A PAZ domain is found at 154–272 (TLWELVNKDP…LLPQLVVPTY (119 aa)). The interdomain connector stretch occupies residues 276–361 (QLESDVAKEI…SQLLLWTNYS (86 aa)). Positions 362 to 544 (RKYPVILPYE…LSKLGVKYYV (183 aa)) are mid domain. In terms of domain architecture, Piwi spans 473–756 (GLAFIAARNK…FANAIRNEWK (284 aa)). Active-site residues include Asp-558, Glu-596, Asp-628, and His-745. A Mn(2+)-binding site is contributed by Asp-558. Mn(2+) is bound by residues Asp-628, His-745, and Val-770.

The protein belongs to the argonaute family. Long pAgo subfamily. As to quaternary structure, monomer. Requires Mn(2+) as cofactor.

Inhibited at greater than 500 mM NaCl. A DNA-guided ssDNA endonuclease that may play a role in defense against invading mobile genetic elements. Uses short 5'-phospho-ssDNA sequences as guides (gDNA) to bind complementary target strands, resulting in cleavage of the target DNA (tDNA). Endonucleolytically cleaves DNA in short dsDNA (the gDNA indicates where to cleave on the tDNA). Efficient guide-dependent target DNA cleavage requires a minimal gDNA length of 15 nucleotides (nt) and works up to at least 31 nt. Overexpression decreases plasmid transformation efficiency. Has no appreciable activity with gRNA or on target RNA. Also has guide-independent activity on plasmid DNA called 'chopping'. The cleavage site is 10 nucleotides (nt) downstream of the target residue base-paired with the 5'-end of the gDNA, cleavage is insensitive to adenine methylation. DNA cleavage produces 5'-phosphomonoesters (as it can be ligated by T4 DNA ligase). The chain is Protein argonaute from Pyrococcus furiosus (strain ATCC 43587 / DSM 3638 / JCM 8422 / Vc1).